The primary structure comprises 225 residues: Sugar fermentation stimulation protein homolog (225 aa).

Belongs to the SfsA family.

This chain is Sugar fermentation stimulation protein homolog, found in Sulfurisphaera tokodaii (strain DSM 16993 / JCM 10545 / NBRC 100140 / 7) (Sulfolobus tokodaii).